A 439-amino-acid polypeptide reads, in one-letter code: Taxadien-5-alpha-ol O-acetyltransferase (439 aa).

Catalysis depends on proton acceptor residues histidine 164 and aspartate 373.

The protein belongs to the plant acyltransferase family.

It carries out the reaction taxa-4(20),11-dien-5alpha-ol + acetyl-CoA = taxa-4(20),11-dien-5alpha-yl acetate + CoA. Its pathway is alkaloid biosynthesis; taxol biosynthesis; 10-deacetyl-2-debenzoylbaccatin III from taxa-4(20),11-dien-5alpha-ol: step 1/3. The chain is Taxadien-5-alpha-ol O-acetyltransferase (TAT) from Taxus cuspidata (Japanese yew).